A 275-amino-acid chain; its full sequence is Pantothenate synthetase (275 aa).

Met-26–His-33 lines the ATP pocket. His-33 functions as the Proton donor in the catalytic mechanism. Gln-57 serves as a coordination point for (R)-pantoate. Gln-57 lines the beta-alanine pocket. Gly-144 to Asp-147 is an ATP binding site. Gln-150 provides a ligand contact to (R)-pantoate. Residues Val-173 and Leu-181–Arg-184 contribute to the ATP site.

Belongs to the pantothenate synthetase family. In terms of assembly, homodimer.

The protein localises to the cytoplasm. It carries out the reaction (R)-pantoate + beta-alanine + ATP = (R)-pantothenate + AMP + diphosphate + H(+). Its pathway is cofactor biosynthesis; (R)-pantothenate biosynthesis; (R)-pantothenate from (R)-pantoate and beta-alanine: step 1/1. Functionally, catalyzes the condensation of pantoate with beta-alanine in an ATP-dependent reaction via a pantoyl-adenylate intermediate. The polypeptide is Pantothenate synthetase (Azoarcus sp. (strain BH72)).